We begin with the raw amino-acid sequence, 287 residues long: Thioredoxin-related transmembrane protein 2 (287 aa).

The N-terminal stretch at 1–35 (MAVLAPLLAFLYAVPGLLRWVSQPYYLLSALLSVS) is a signal peptide. Residues 36-112 (FLLVRKVPPV…ILFFRLDLRM (77 aa)) lie on the Extracellular side of the membrane. Residues 113-133 (GLLYITLCIVFLMTCKPPLYL) form a helical membrane-spanning segment. Topologically, residues 134-287 (GPEHIKYFSD…NEYNDSKKDQ (154 aa)) are cytoplasmic. A Thioredoxin domain is found at 135-269 (PEHIKYFSDK…LYQKAKKIRK (135 aa)). Residues 284-287 (KKDQ) carry the Di-lysine motif motif.

Monomer. Homodimer; disulfide-linked. Occurs in both reduced and oxidized monomeric form. Oxidative conditions increase homodimerization.

The protein localises to the endoplasmic reticulum membrane. It localises to the mitochondrion membrane. Functionally, endoplasmic reticulum and mitochondria-associated protein that probably functions as a regulator of cellular redox state and thereby regulates protein post-translational modification, protein folding and mitochondrial activity. The chain is Thioredoxin-related transmembrane protein 2 (tmx2) from Xenopus tropicalis (Western clawed frog).